The chain runs to 229 residues: Large ribosomal subunit protein uL1 (229 aa).

The protein belongs to the universal ribosomal protein uL1 family. Part of the 50S ribosomal subunit.

Binds directly to 23S rRNA. The L1 stalk is quite mobile in the ribosome, and is involved in E site tRNA release. Its function is as follows. Protein L1 is also a translational repressor protein, it controls the translation of the L11 operon by binding to its mRNA. The polypeptide is Large ribosomal subunit protein uL1 (Lacticaseibacillus casei (strain BL23) (Lactobacillus casei)).